Reading from the N-terminus, the 428-residue chain is Tyrosine--tRNA ligase (428 aa).

Tyr-36 is an L-tyrosine binding site. The short motif at 41 to 50 (PTAPSLHAGH) is the 'HIGH' region element. The L-tyrosine site is built by Tyr-171 and Gln-175. Residues 231 to 235 (KFGKS) carry the 'KMSKS' region motif. Lys-234 contributes to the ATP binding site. An S4 RNA-binding domain is found at 359–416 (DSIVDLLVETGLAASKGAARRNVAEGGVYVNNIRIESDEWIPQHSDFLHERWLVLRRG).

Belongs to the class-I aminoacyl-tRNA synthetase family. TyrS type 1 subfamily. Homodimer.

Its subcellular location is the cytoplasm. It carries out the reaction tRNA(Tyr) + L-tyrosine + ATP = L-tyrosyl-tRNA(Tyr) + AMP + diphosphate + H(+). Its function is as follows. Catalyzes the attachment of tyrosine to tRNA(Tyr) in a two-step reaction: tyrosine is first activated by ATP to form Tyr-AMP and then transferred to the acceptor end of tRNA(Tyr). The polypeptide is Tyrosine--tRNA ligase (Mycolicibacterium fortuitum (Mycobacterium fortuitum)).